Reading from the N-terminus, the 181-residue chain is Oligoribonuclease (181 aa).

The Exonuclease domain maps to 8 to 171 (LIWIDLEMTG…DDIRESIAEL (164 aa)). Tyr-129 is an active-site residue.

This sequence belongs to the oligoribonuclease family.

It is found in the cytoplasm. Functionally, 3'-to-5' exoribonuclease specific for small oligoribonucleotides. This Vibrio cholerae serotype O1 (strain ATCC 39541 / Classical Ogawa 395 / O395) protein is Oligoribonuclease.